Reading from the N-terminus, the 689-residue chain is Solute carrier organic anion transporter family member 1B2 (689 aa).

At 1–26 (MDQTQHPSKAAQPLRSEKTRHCDGFR) the chain is on the cytoplasmic side. The helical transmembrane segment at 27–46 (IFLAALSFSYICKALGGVIM) threads the bilayer. At 47–65 (KSSITQIERRFDIPSSISG) the chain is on the extracellular side. A helical membrane pass occupies residues 66 to 86 (LIDGGFEIGNLLVIVFVSYFG). Residues 87 to 92 (SKLHRP) lie on the Cytoplasmic side of the membrane. Residues 93–117 (KLIGTGCFIMGIGSILTALPHFFMG) form a helical membrane-spanning segment. Topologically, residues 118–163 (YYRYATENDISSLHNSTLTCLVNQTTSLTGTSPEIMEKGCEKGSNS) are extracellular. N-linked (GlcNAc...) asparagine glycosylation is found at N132 and N140. A helical transmembrane segment spans residues 164–192 (YTWIYVLMGNMLRGIGETPIVPLGVSYID). Over 193–211 (DFAKEGNSSMYLGTLHTIA) the chain is Cytoplasmic. Residues 212 to 232 (MIGPILGFIMSSVFAKLYVDV) traverse the membrane as a helical segment. Residues 233-250 (GYVDLRSVRITPQDARWV) are Extracellular-facing. The helical transmembrane segment at 251-275 (GAWWLGFIVNGLLCIICSIPFFFLP) threads the bilayer. Residues 276-326 (KIPKRSQKERKNSASLHVLKTDEDKNPVTNPTTQEKQAPANLTGFLWSLRS) are Cytoplasmic-facing. Phosphoserine is present on residues S288 and S290. Residues 327–348 (ILTNEQYVIFLILTLLQISSFI) traverse the membrane as a helical segment. The Extracellular segment spans residues 349–368 (GSFTYLFKFIEQQFGQTASQ). The helical transmembrane segment at 369 to 392 (ANFLLGVITIPTMASGMFLGGYLI) threads the bilayer. Over 393–396 (KRLK) the chain is Cytoplasmic. The helical transmembrane segment at 397 to 420 (LTLLGITKFVFFTTTMAYVFYLSY) threads the bilayer. Residues 421–533 (FLLICENKAF…DKCKTKYYFY (113 aa)) lie on the Extracellular side of the membrane. The Kazal-like domain maps to 448–505 (DVPLSYCNSDCICDKNQWEPVCGENGVTYISPCLAGCKSFRGDKKLMNIEFYDCSCVS). 3 cysteine pairs are disulfide-bonded: C454–C484, C460–C480, and C469–C503. N513 is a glycosylation site (N-linked (GlcNAc...) asparagine). Residues 534–556 (ITFQVIISFFTALGSTSLMLILI) traverse the membrane as a helical segment. At 557 to 565 (RSVQPELKS) the chain is on the cytoplasmic side. The chain crosses the membrane as a helical span at residues 566-591 (LGMGFHSLVVRTLGGILAPVYYGALI). The Extracellular segment spans residues 592 to 625 (DRTCMKWSVTSCGARGACRLYNSRLFGMIYVGLS). The chain crosses the membrane as a helical span at residues 626 to 643 (IALKTPILLLYVALIYVM). At 644–689 (KRKMKRNDNKILENGRKFTDEGNPEPVNNNGYSCVPSDEKNSETPL) the chain is on the cytoplasmic side. A disordered region spans residues 658-689 (GRKFTDEGNPEPVNNNGYSCVPSDEKNSETPL). T662 bears the Phosphothreonine mark. S680 carries the phosphoserine modification. Residues 680-689 (SDEKNSETPL) are compositionally biased toward basic and acidic residues.

It belongs to the organo anion transporter (TC 2.A.60) family. In terms of tissue distribution, liver specific.

Its subcellular location is the cell membrane. It catalyses the reaction estrone 3-sulfate(out) = estrone 3-sulfate(in). The enzyme catalyses taurocholate(out) = taurocholate(in). The catalysed reaction is prostaglandin E2(out) = prostaglandin E2(in). It carries out the reaction L-thyroxine(out) = L-thyroxine(in). Functionally, mediates the Na(+)-independent uptake of organic anions such as taurochlate, bromosulfophthalein and steroid conjugates (estrone 3-sulfate, 17-beta-glucuronosyl estradiol, dehydroepiandrosterone sulfate). Also transports prostaglandin E2 and L-thyroxine (T4). Shows a pH-sensitive substrate specificity which may be ascribed to the protonation state of the binding site and leads to a stimulation of substrate transport in an acidic microenvironment. Hydrogencarbonate/HCO3(-) acts as the probable counteranion that exchanges for organic anions. This Mus musculus (Mouse) protein is Solute carrier organic anion transporter family member 1B2 (Slco1b2).